Here is a 764-residue protein sequence, read N- to C-terminus: Putative wall-associated receptor kinase-like 13 (764 aa).

An N-terminal signal peptide occupies residues 1 to 26; sequence MRGNKNYYFLSLLYFLSLPILHFSSC. Residues 27-379 are Extracellular-facing; the sequence is THKCGDIQIP…HRCIDYHIPE (353 aa). 8 N-linked (GlcNAc...) asparagine glycosylation sites follow: Asn-78, Asn-114, Asn-121, Asn-164, Asn-233, Asn-238, Asn-259, and Asn-283. An atypical EGF-like region spans residues 308 to 372; sequence CTCDNHIASG…CINTSGGHRC (65 aa). Intrachain disulfides connect Cys-310/Cys-323, Cys-345/Cys-363, and Cys-352/Cys-372. A glycan (N-linked (GlcNAc...) asparagine) is linked at Asn-365. A helical membrane pass occupies residues 380 to 400; the sequence is VMLGLGAGFFVLIVGGGIWWW. The Cytoplasmic segment spans residues 401–764; the sequence is RKLLRKRRMT…SGSTEIARSM (364 aa). One can recognise a Protein kinase domain in the interval 454-728; sequence FNDNRVIGQG…REVSTALERI (275 aa). ATP-binding positions include 460–468 and Lys-482; that span reads IGQGGQGTV. Position 527 is a phosphotyrosine (Tyr-527). The Proton acceptor role is filled by Asp-579. 2 positions are modified to phosphothreonine: Thr-613 and Thr-618. Tyr-626 carries the post-translational modification Phosphotyrosine.

It belongs to the protein kinase superfamily. Ser/Thr protein kinase family.

It localises to the membrane. The enzyme catalyses L-seryl-[protein] + ATP = O-phospho-L-seryl-[protein] + ADP + H(+). It catalyses the reaction L-threonyl-[protein] + ATP = O-phospho-L-threonyl-[protein] + ADP + H(+). Putative serine/threonine-protein kinase that may function as a signaling receptor of extracellular matrix component. The polypeptide is Putative wall-associated receptor kinase-like 13 (WAKL13) (Arabidopsis thaliana (Mouse-ear cress)).